The chain runs to 128 residues: Small nuclear ribonucleoprotein SmD3a (128 aa).

One can recognise a Sm domain in the interval 7–79 (IPVKLLHESS…VRFLVIPDML (73 aa)). Residues 90-128 (GKGKSASLGVGRGRGAAMRAKGTGRGTGGGRGAVPPVRR) are disordered. Residues 112-121 (TGRGTGGGRG) show a composition bias toward gly residues.

The protein belongs to the snRNP core protein family. In terms of tissue distribution, expressed in young seedlings, roots, leaves, flowers and immature siliques.

Its subcellular location is the cytoplasm. The protein resides in the cytosol. It is found in the nucleus. Functionally, core component of the spliceosomal U1, U2, U4 and U5 small nuclear ribonucleoproteins (snRNPs), the building blocks of the spliceosome. May play a minor role in the splicing of cellular pre-mRNAs. The polypeptide is Small nuclear ribonucleoprotein SmD3a (Arabidopsis thaliana (Mouse-ear cress)).